Reading from the N-terminus, the 136-residue chain is Probable flagellum biosynthesis repressor protein FlbT 2 (136 aa).

It belongs to the FlbT family.

In terms of biological role, has a post-transcriptional repressor function in flagellum biogenesis. Associates with the 5'-UTR of fljK mRNA and promotes its degradation. The chain is Probable flagellum biosynthesis repressor protein FlbT 2 from Bradyrhizobium diazoefficiens (strain JCM 10833 / BCRC 13528 / IAM 13628 / NBRC 14792 / USDA 110).